Here is a 256-residue protein sequence, read N- to C-terminus: Thiazole synthase (256 aa).

Lysine 95 functions as the Schiff-base intermediate with DXP in the catalytic mechanism. 1-deoxy-D-xylulose 5-phosphate-binding positions include glycine 156, 182–183 (AG), and 204–205 (NT).

This sequence belongs to the ThiG family. Homotetramer. Forms heterodimers with either ThiH or ThiS.

It localises to the cytoplasm. The enzyme catalyses [ThiS sulfur-carrier protein]-C-terminal-Gly-aminoethanethioate + 2-iminoacetate + 1-deoxy-D-xylulose 5-phosphate = [ThiS sulfur-carrier protein]-C-terminal Gly-Gly + 2-[(2R,5Z)-2-carboxy-4-methylthiazol-5(2H)-ylidene]ethyl phosphate + 2 H2O + H(+). It functions in the pathway cofactor biosynthesis; thiamine diphosphate biosynthesis. Functionally, catalyzes the rearrangement of 1-deoxy-D-xylulose 5-phosphate (DXP) to produce the thiazole phosphate moiety of thiamine. Sulfur is provided by the thiocarboxylate moiety of the carrier protein ThiS. In vitro, sulfur can be provided by H(2)S. The protein is Thiazole synthase of Cronobacter sakazakii (strain ATCC BAA-894) (Enterobacter sakazakii).